The primary structure comprises 640 residues: uncharacterized protein (640 aa).

14 helical membrane passes run 8–28 (GGVV…LGMF), 52–72 (LGGF…CYLI), 90–110 (LFVA…FLLA), 136–156 (LWYA…LVVL), 179–199 (VFML…LHAW), 208–228 (PSPV…YGIV), 241–261 (WWGL…VLQA), 277–297 (ENMG…DTGA), 298–318 (YGPA…HAAF), 352–372 (TVFF…AGFV), 391–411 (IVAL…GLSV), 446–466 (AIAA…APMV), 497–517 (IAPG…AVLA), and 619–639 (GSVH…LVVA).

Belongs to the complex I subunit 4 family.

The protein localises to the cell membrane. This is an uncharacterized protein from Mycobacterium tuberculosis (strain CDC 1551 / Oshkosh).